The sequence spans 140 residues: Large ribosomal subunit protein uL16 (140 aa).

The protein belongs to the universal ribosomal protein uL16 family. In terms of assembly, part of the 50S ribosomal subunit.

In terms of biological role, binds 23S rRNA and is also seen to make contacts with the A and possibly P site tRNAs. The chain is Large ribosomal subunit protein uL16 from Syntrophus aciditrophicus (strain SB).